The primary structure comprises 231 residues: Transmembrane protein 225 (231 aa).

Residues 1–13 (MMRIPNRSIQAAN) are Cytoplasmic-facing. The helical transmembrane segment at 14 to 34 (IFFSSGAILLLIAGLIMENWV) threads the bilayer. Over 35–71 (ELIPKVRKDKVTHSPWLGCCPPFWPEESLEAIRRMMM) the chain is Extracellular. The helical transmembrane segment at 72–92 (MSLNISIYLNLIIGLQFTYMI) threads the bilayer. The Cytoplasmic segment spans residues 93–99 (SQNKCVH). A helical transmembrane segment spans residues 100–120 (LLIGFLSFFTGCLLFYAIIVY). The Extracellular portion of the chain corresponds to 121-139 (HHKLNKGQYVYFVNYKTKW). A helical transmembrane segment spans residues 140–160 (IVFTIYLTIALFLTCGIFSFI). The Cytoplasmic segment spans residues 161–231 (QCTNRCACMK…LQSRRVTWAL (71 aa)). Positions 225-229 (RRVTW) match the RVxF motif.

As to quaternary structure, interacts (via RVxF motif) with PPP1CC. As to expression, expressed in testis, specifically in spermatocytes and round spermatids.

The protein resides in the cytoplasmic vesicle. The protein localises to the secretory vesicle. It localises to the acrosome membrane. In terms of biological role, probably inhibits protein phosphatase 1 (PP1) in sperm via binding to catalytic subunit PPP1CC. The chain is Transmembrane protein 225 (Tmem225) from Rattus norvegicus (Rat).